The primary structure comprises 329 residues: Biotin synthase (329 aa).

The Radical SAM core domain occupies 48–278 (FLGTGVDLCS…DRKIAVCGGR (231 aa)). Residues cysteine 66, cysteine 70, and cysteine 73 each coordinate [4Fe-4S] cluster. [2Fe-2S] cluster is bound by residues serine 143 and cysteine 203.

It belongs to the radical SAM superfamily. Biotin synthase family. Homodimer. It depends on [4Fe-4S] cluster as a cofactor. The cofactor is [2Fe-2S] cluster.

It catalyses the reaction (4R,5S)-dethiobiotin + (sulfur carrier)-SH + 2 reduced [2Fe-2S]-[ferredoxin] + 2 S-adenosyl-L-methionine = (sulfur carrier)-H + biotin + 2 5'-deoxyadenosine + 2 L-methionine + 2 oxidized [2Fe-2S]-[ferredoxin]. It functions in the pathway cofactor biosynthesis; biotin biosynthesis; biotin from 7,8-diaminononanoate: step 2/2. In terms of biological role, catalyzes the conversion of dethiobiotin (DTB) to biotin by the insertion of a sulfur atom into dethiobiotin via a radical-based mechanism. The sequence is that of Biotin synthase from Geobacter sulfurreducens (strain ATCC 51573 / DSM 12127 / PCA).